The following is a 104-amino-acid chain: Vegetative-specific protein H7 (104 aa).

In terms of domain architecture, HTH cro/C1-type spans 43–97 (IQRARNALKMTQKELAFKINERPGVINEYESGSAIPSQAVLSKLEKALNVKLRGK). The H-T-H motif DNA-binding region spans 54–73 (QKELAFKINERPGVINEYES).

This chain is Vegetative-specific protein H7 (cinD-1), found in Dictyostelium discoideum (Social amoeba).